The primary structure comprises 78 residues: Sec-independent protein translocase protein TatA (78 aa).

The chain crosses the membrane as a helical span at residues Met-1–Gly-21. A disordered region spans residues Asp-46 to Ala-78. Residues Thr-52–Thr-62 show a composition bias toward basic and acidic residues. Residues Thr-63–Ala-78 show a composition bias toward low complexity.

It belongs to the TatA/E family. As to quaternary structure, the Tat system comprises two distinct complexes: a TatABC complex, containing multiple copies of TatA, TatB and TatC subunits, and a separate TatA complex, containing only TatA subunits. Substrates initially bind to the TatABC complex, which probably triggers association of the separate TatA complex to form the active translocon.

It localises to the cell inner membrane. Part of the twin-arginine translocation (Tat) system that transports large folded proteins containing a characteristic twin-arginine motif in their signal peptide across membranes. TatA could form the protein-conducting channel of the Tat system. The chain is Sec-independent protein translocase protein TatA from Nitratiruptor sp. (strain SB155-2).